Reading from the N-terminus, the 162-residue chain is D-aminoacyl-tRNA deacylase (162 aa).

Positions 145–146 (GP) match the Gly-cisPro motif, important for rejection of L-amino acids motif.

This sequence belongs to the DTD family. Homodimer.

The protein localises to the cytoplasm. The enzyme catalyses glycyl-tRNA(Ala) + H2O = tRNA(Ala) + glycine + H(+). It carries out the reaction a D-aminoacyl-tRNA + H2O = a tRNA + a D-alpha-amino acid + H(+). Its function is as follows. An aminoacyl-tRNA editing enzyme that deacylates mischarged D-aminoacyl-tRNAs. Also deacylates mischarged glycyl-tRNA(Ala), protecting cells against glycine mischarging by AlaRS. Acts via tRNA-based rather than protein-based catalysis; rejects L-amino acids rather than detecting D-amino acids in the active site. By recycling D-aminoacyl-tRNA to D-amino acids and free tRNA molecules, this enzyme counteracts the toxicity associated with the formation of D-aminoacyl-tRNA entities in vivo and helps enforce protein L-homochirality. This is D-aminoacyl-tRNA deacylase from Bifidobacterium longum (strain DJO10A).